The following is a 57-amino-acid chain: LECYQKSKVVTCQPEQKFCYSDTTMFFPNHPVYLSGCTFSCTEEGNRRCCTTDKCNR.

Disulfide bonds link cysteine 3–cysteine 19, cysteine 12–cysteine 37, cysteine 41–cysteine 49, and cysteine 50–cysteine 55.

This sequence belongs to the three-finger toxin family. Short-chain subfamily. Orphan group XX sub-subfamily. As to expression, expressed by the venom gland.

It is found in the secreted. Its function is as follows. Anticoagulant protein that prevents the activation of factor X (F10). It acts by potently inhibiting the extrinsic tenase complex (ETC) (IC(50)=116.49 nM), a complex composed by active factor VII (F7a), tissue factor (TF) and F10. In addition, it shows weaker activities on other complexes. It weakly inhibits F10 activation by inhibiting the intrinsic tenase complex (IC(50)=4.05 uM), a complex composed by active factor IX (IXa, F9a), its cofactor factor VIII (VIIIa, F8a), and their substrate F10. It also weakly prevents prothrombin activation by inhibiting the prothrombinase complex (IC(50)=17.66 uM). It shows high kinetic constant towards F7a/TF/F10/phospholipids complex (Ki=30.62 nM) and lower kinetic constant towards F7a/TF/phospholipids complex (Ki=153.75 nM). This Hemachatus haemachatus (Rinkhals) protein is Exactin.